The following is a 304-amino-acid chain: Coenzyme PQQ synthesis protein B (304 aa).

This sequence belongs to the PqqB family.

The protein operates within cofactor biosynthesis; pyrroloquinoline quinone biosynthesis. In terms of biological role, may be involved in the transport of PQQ or its precursor to the periplasm. This is Coenzyme PQQ synthesis protein B from Pseudomonas aeruginosa (strain LESB58).